Consider the following 268-residue polypeptide: Ubiquinone biosynthesis protein COQ4 homolog, mitochondrial (268 aa).

H171, D172, H175, and E187 together coordinate Zn(2+).

The protein belongs to the COQ4 family. As to quaternary structure, component of a multi-subunit COQ enzyme complex. The cofactor is Zn(2+).

It is found in the mitochondrion inner membrane. It carries out the reaction a 4-hydroxy-3-methoxy-5-(all-trans-polyprenyl)benzoate + H(+) = a 2-methoxy-6-(all-trans-polyprenyl)phenol + CO2. It participates in cofactor biosynthesis; ubiquinone biosynthesis. Lyase that catalyzes the C1-decarboxylation of 4-hydroxy-3-methoxy-5-(all-trans-polyprenyl)benzoic acid into 2-methoxy-6-(all-trans-polyprenyl)phenol during ubiquinone biosynthesis. In Drosophila melanogaster (Fruit fly), this protein is Ubiquinone biosynthesis protein COQ4 homolog, mitochondrial.